A 359-amino-acid chain; its full sequence is Phosphoserine aminotransferase (359 aa).

R42 contributes to the L-glutamate binding site. Pyridoxal 5'-phosphate is bound by residues 76 to 77, W102, T152, D171, and Q194; that span reads AS. At K195 the chain carries N6-(pyridoxal phosphate)lysine. 236-237 is a binding site for pyridoxal 5'-phosphate; it reads NT.

Belongs to the class-V pyridoxal-phosphate-dependent aminotransferase family. SerC subfamily. In terms of assembly, homodimer. Requires pyridoxal 5'-phosphate as cofactor.

It is found in the cytoplasm. The enzyme catalyses O-phospho-L-serine + 2-oxoglutarate = 3-phosphooxypyruvate + L-glutamate. It carries out the reaction 4-(phosphooxy)-L-threonine + 2-oxoglutarate = (R)-3-hydroxy-2-oxo-4-phosphooxybutanoate + L-glutamate. The protein operates within amino-acid biosynthesis; L-serine biosynthesis; L-serine from 3-phospho-D-glycerate: step 2/3. Its pathway is cofactor biosynthesis; pyridoxine 5'-phosphate biosynthesis; pyridoxine 5'-phosphate from D-erythrose 4-phosphate: step 3/5. Its function is as follows. Catalyzes the reversible conversion of 3-phosphohydroxypyruvate to phosphoserine and of 3-hydroxy-2-oxo-4-phosphonooxybutanoate to phosphohydroxythreonine. The polypeptide is Phosphoserine aminotransferase (Ruthia magnifica subsp. Calyptogena magnifica).